We begin with the raw amino-acid sequence, 444 residues long: 23S rRNA (uracil(1939)-C(5))-methyltransferase RlmD (444 aa).

Residues 5-67 (RSRIDRTPFQ…RHFDEARTVE (63 aa)) enclose the TRAM domain. Residues cysteine 80, cysteine 86, cysteine 89, and cysteine 168 each contribute to the [4Fe-4S] cluster site. Glutamine 276, phenylalanine 305, asparagine 310, glutamate 326, aspartate 353, and aspartate 374 together coordinate S-adenosyl-L-methionine. Cysteine 400 acts as the Nucleophile in catalysis.

The protein belongs to the class I-like SAM-binding methyltransferase superfamily. RNA M5U methyltransferase family. RlmD subfamily.

It carries out the reaction uridine(1939) in 23S rRNA + S-adenosyl-L-methionine = 5-methyluridine(1939) in 23S rRNA + S-adenosyl-L-homocysteine + H(+). In terms of biological role, catalyzes the formation of 5-methyl-uridine at position 1939 (m5U1939) in 23S rRNA. The protein is 23S rRNA (uracil(1939)-C(5))-methyltransferase RlmD of Stenotrophomonas maltophilia (strain K279a).